The primary structure comprises 409 residues: F-box protein At3g17320 (409 aa).

The 47-residue stretch at Met-1–Leu-47 folds into the F-box domain.

The protein is F-box protein At3g17320 of Arabidopsis thaliana (Mouse-ear cress).